The sequence spans 696 residues: Probable E3 ubiquitin ligase complex SCF subunit sconB (696 aa).

Basic and acidic residues predominate over residues 1 to 12; sequence MDAHELSFRDGH. Residues 1–72 are disordered; the sequence is MDAHELSFRD…HSFNTQKPIR (72 aa). The segment covering 55-69 has biased composition (polar residues); it reads PGSTQDKPHSFNTQK. Residues 193-239 form the F-box domain; sequence IDFLTALPPEISFKILCYLDTTSLCKAAQVSRRWRALADDDVVWHRM. The interval 290-314 is disordered; that stretch reads SATIETAAAGSKRKPESGKEDTAMV. A compositionally biased stretch (basic and acidic residues) spans 302 to 313; it reads RKPESGKEDTAM. 7 WD repeats span residues 365 to 402, 405 to 444, 446 to 482, 484 to 525, 579 to 622, 623 to 662, and 665 to 696; these read GHSNGIMCLQFEDNILATGSYDATIKIWDTETGEELRT, GHQSGIRCLQFDDTKLISGSMDHTLKVWNWRTGECISTYS, HRGGVVGLHFDATILASGSVDKTVKIWNFEDKSTCLL, GHTD…RTFH, DTPS…CLRT, FFGHLEGVWALAADTLRIVSGAEDRMVKIWDPRTGKCERT, and GHSGPVTCIGLGDSRFATGSEDCEVRMYSFQT. The tract at residues 554–596 is disordered; sequence NVSVTSGDSPAASPQALPGFDGQTSDTPSSAFGPAFDDGRPSP.

This sequence belongs to the WD repeat MET30/SCONB/SCON-2 family. In terms of assembly, component of the SCF(sconB) E3 ubiquitin ligase complex.

The protein operates within protein modification; protein ubiquitination. Its function is as follows. Component of the SCF(sconB) E3 ubiquitin ligase complex involved in the regulation of sulfur metabolite repression, probably by mediating the inactivation or degradation of the metR transcription factor. This Aspergillus fumigatus (strain ATCC MYA-4609 / CBS 101355 / FGSC A1100 / Af293) (Neosartorya fumigata) protein is Probable E3 ubiquitin ligase complex SCF subunit sconB (sconB).